A 193-amino-acid chain; its full sequence is Probable nicotinate-nucleotide adenylyltransferase (193 aa).

This sequence belongs to the NadD family.

It catalyses the reaction nicotinate beta-D-ribonucleotide + ATP + H(+) = deamido-NAD(+) + diphosphate. Its pathway is cofactor biosynthesis; NAD(+) biosynthesis; deamido-NAD(+) from nicotinate D-ribonucleotide: step 1/1. Its function is as follows. Catalyzes the reversible adenylation of nicotinate mononucleotide (NaMN) to nicotinic acid adenine dinucleotide (NaAD). This Coprothermobacter proteolyticus (strain ATCC 35245 / DSM 5265 / OCM 4 / BT) protein is Probable nicotinate-nucleotide adenylyltransferase.